A 439-amino-acid polypeptide reads, in one-letter code: Acyl transferase 4 (439 aa).

Residues H166 and D382 each act as proton acceptor in the active site.

This sequence belongs to the plant acyltransferase family.

In terms of biological role, grass-specific monolignol p-coumaroyl transferase involved in the biosynthesis of acylated monolignols or monolignol conjugates that serve as monomer precursors of lignin. Can synthesize sinapyl p-coumarate, p-coumaryl p-coumarate, sinapyl caffeate and p-coumaryl caffeate in vitro. The sequence is that of Acyl transferase 4 from Oryza sativa subsp. japonica (Rice).